The primary structure comprises 338 residues: dTDP-glucose 4,6-dehydratase (338 aa).

NAD(+) is bound by residues 12 to 13 (FI), 33 to 36 (DKLT), 59 to 60 (DI), 81 to 85 (LAAES), and Thr-100. Ser-85 contributes to the substrate binding site. Residue Thr-134 coordinates substrate. Asp-135 functions as the Proton donor in the catalytic mechanism. Residues Glu-136 and Tyr-160 each act as proton acceptor in the active site. Residue 160-164 (YSASK) participates in NAD(+) binding. Asn-189 is a binding site for substrate. Asn-190 lines the NAD(+) pocket. Substrate is bound by residues 199–200 (KL), 215–217 (PIY), Arg-224, Asn-259, and 293–297 (DRPGH).

It belongs to the NAD(P)-dependent epimerase/dehydratase family. dTDP-glucose dehydratase subfamily. Homodimer. NAD(+) serves as cofactor.

The enzyme catalyses dTDP-alpha-D-glucose = dTDP-4-dehydro-6-deoxy-alpha-D-glucose + H2O. The protein operates within carbohydrate biosynthesis; dTDP-L-rhamnose biosynthesis. Its pathway is bacterial outer membrane biogenesis; LPS O-antigen biosynthesis. Catalyzes the dehydration of dTDP-D-glucose to form dTDP-6-deoxy-D-xylo-4-hexulose via a three-step process involving oxidation, dehydration and reduction. The polypeptide is dTDP-glucose 4,6-dehydratase (rffG) (Haemophilus influenzae (strain ATCC 51907 / DSM 11121 / KW20 / Rd)).